Here is a 306-residue protein sequence, read N- to C-terminus: 33 kDa chaperonin (306 aa).

2 disulfides stabilise this stretch: Cys-242–Cys-244 and Cys-275–Cys-278.

This sequence belongs to the HSP33 family. Post-translationally, under oxidizing conditions two disulfide bonds are formed involving the reactive cysteines. Under reducing conditions zinc is bound to the reactive cysteines and the protein is inactive.

It localises to the cytoplasm. In terms of biological role, redox regulated molecular chaperone. Protects both thermally unfolding and oxidatively damaged proteins from irreversible aggregation. Plays an important role in the bacterial defense system toward oxidative stress. In Gloeobacter violaceus (strain ATCC 29082 / PCC 7421), this protein is 33 kDa chaperonin.